Here is a 91-residue protein sequence, read N- to C-terminus: Small ribosomal subunit protein uS15 (91 aa).

This sequence belongs to the universal ribosomal protein uS15 family. As to quaternary structure, part of the 30S ribosomal subunit. Forms a bridge to the 50S subunit in the 70S ribosome, contacting the 23S rRNA.

One of the primary rRNA binding proteins, it binds directly to 16S rRNA where it helps nucleate assembly of the platform of the 30S subunit by binding and bridging several RNA helices of the 16S rRNA. In terms of biological role, forms an intersubunit bridge (bridge B4) with the 23S rRNA of the 50S subunit in the ribosome. The sequence is that of Small ribosomal subunit protein uS15 from Rickettsia typhi (strain ATCC VR-144 / Wilmington).